Reading from the N-terminus, the 528-residue chain is Abrin-d (528 aa).

A Pyrrolidone carboxylic acid modification is found at Gln-1. Glu-164 is an active-site residue. The N-linked (GlcNAc...) asparagine glycan is linked to Asn-200. 3 cysteine pairs are disulfide-bonded: Cys-247/Cys-269, Cys-286/Cys-305, and Cys-329/Cys-346. Residues 273–400 enclose the Ricin B-type lectin 1 domain; that stretch reads YEPTVRIGGR…YLMRQGWRTG (128 aa). Residues 283-325 form a 1-alpha repeat; that stretch reads DGMCVDVYDDGYHNGNRIIAWKCKDRLEENQLWTLKSDLTIRS. The 1-beta repeat unit spans residues 326-366; sequence NGKCLTTEGYAPGNYVMIYDCTSAVAEATYWEIWDNGTIIN. 2 N-linked (GlcNAc...) asparagine glycosylation sites follow: Asn-361 and Asn-401. The stretch at 369-401 is one 1-gamma repeat; it reads SALVLSAESSSMGGTLTVQTNEYLMRQGWRTGN. Residues 403–527 enclose the Ricin B-type lectin 2 domain; that stretch reads TSPFVTSISG…GKPNQIWLTL (125 aa). The stretch at 414–449 is one 2-alpha repeat; it reads SDLCMQAQGSNVWLADCDNNKKEQQWALYTDGSIRS. Intrachain disulfides connect Cys-417-Cys-430 and Cys-456-Cys-473. One copy of the 2-beta repeat lies at 453 to 492; sequence TNNCLTSKDHKQGSPIVLMACSNGWASQRWLFKNDGSIYS. The stretch at 495–528 is one 2-gamma repeat; that stretch reads DDMVMDVKGSDPSLKQIILWPYTGKPNQIWLTLF.

The protein in the N-terminal section; belongs to the ribosome-inactivating protein family. Type 2 RIP subfamily. In terms of assembly, disulfide-linked dimer of A and B chains.

The enzyme catalyses Endohydrolysis of the N-glycosidic bond at one specific adenosine on the 28S rRNA.. In terms of biological role, the A chain is responsible for inhibiting protein synthesis through the catalytic inactivation of 60S ribosomal subunits by removing adenine from position 4,324 of 28S rRNA. Its function is as follows. The B chain is a galactose-specific lectin that facilitates the binding of abrin to the cell membrane that precedes endocytosis. This is Abrin-d from Abrus precatorius (Indian licorice).